A 596-amino-acid polypeptide reads, in one-letter code: Arginine--tRNA ligase (596 aa).

The 'HIGH' region signature appears at Ala128–His138.

Belongs to the class-I aminoacyl-tRNA synthetase family. In terms of assembly, monomer.

It localises to the cytoplasm. It catalyses the reaction tRNA(Arg) + L-arginine + ATP = L-arginyl-tRNA(Arg) + AMP + diphosphate. The polypeptide is Arginine--tRNA ligase (Acinetobacter baumannii (strain AB307-0294)).